The sequence spans 164 residues: Neurotrophin-3 (164 aa).

An N-terminal signal peptide occupies residues 1–3; it reads IQS. Positions 4 to 118 are excised as a propeptide; that stretch reads TSMDQGBLSE…GLNRTSRRKR (115 aa). Positions 89–126 are disordered; sequence LLSENTPLEPPPLYLTEEPMGLNRTSRRKRFAEGKSHR. A glycan (N-linked (GlcNAc...) asparagine) is linked at Asn-111.

Belongs to the NGF-beta family.

The protein localises to the secreted. Functionally, seems to promote the survival of visceral and proprioceptive sensory neurons. The chain is Neurotrophin-3 (NTF3) from Cylindrophis ruffus (Red-tailed pipe snake).